A 354-amino-acid polypeptide reads, in one-letter code: Guanine nucleotide-binding protein G(o) subunit alpha (354 aa).

The N-myristoyl glycine moiety is linked to residue G2. Residue C3 is the site of S-palmitoyl cysteine attachment. Residues 32–354 form the G-alpha domain; sequence KDVKLLLLGA…AYNLRGCGLY (323 aa). The tract at residues 35 to 48 is G1 motif; that stretch reads KLLLLGAGESGKST. 9 residues coordinate GTP: E43, K46, S47, T48, S152, L176, R177, T178, and R179. Mg(2+) is bound at residue S47. The interval 174–182 is G2 motif; it reads DILRTRVKT. T182 contacts Mg(2+). Residues 197 to 206 are G3 motif; the sequence is FRLFDVGGQR. A G4 motif region spans residues 266 to 273; sequence ILFLNKKD. The GTP site is built by N270, D273, and C325. The interval 324-329 is G5 motif; sequence TCATDT.

Belongs to the G-alpha family. G(i/o/t/z) subfamily. As to quaternary structure, g proteins are composed of 3 units; alpha, beta and gamma.

The enzyme catalyses GTP + H2O = GDP + phosphate + H(+). Its function is as follows. Guanine nucleotide-binding proteins (G proteins) function as transducers downstream of G protein-coupled receptors (GPCRs) in numerous signaling cascades. The alpha chain contains the guanine nucleotide binding site and alternates between an active, GTP-bound state and an inactive, GDP-bound state. Signaling by an activated GPCR promotes GDP release and GTP binding. The alpha subunit has a low GTPase activity that converts bound GTP to GDP, thereby terminating the signal. Both GDP release and GTP hydrolysis are modulated by numerous regulatory proteins. Signaling is mediated via effector proteins, such as adenylate cyclase. Inhibits adenylate cyclase activity, leading to decreased intracellular cAMP levels. The polypeptide is Guanine nucleotide-binding protein G(o) subunit alpha (gna0) (Xenopus laevis (African clawed frog)).